Here is a 494-residue protein sequence, read N- to C-terminus: 4-trimethylaminobutyraldehyde dehydrogenase (494 aa).

Ser-2 bears the N-acetylserine mark. Lys-30 is modified (N6-acetyllysine; alternate). At Lys-30 the chain carries N6-succinyllysine; alternate. Lys-59 bears the N6-succinyllysine mark. NAD(+) is bound by residues Lys-180 and 232-236 (GSVPT). Residue Glu-254 is the Proton acceptor of the active site. Cys-288 functions as the Nucleophile in the catalytic mechanism. Lys-298 carries the N6-acetyllysine modification. At Lys-303 the chain carries N6-acetyllysine; alternate. N6-succinyllysine; alternate is present on Lys-303. N6-acetyllysine is present on Lys-344. Glu-391 contributes to the NAD(+) binding site.

It belongs to the aldehyde dehydrogenase family. Homotetramer.

Its subcellular location is the cytoplasm. The protein resides in the cytosol. The enzyme catalyses 4-(trimethylamino)butanal + NAD(+) + H2O = 4-(trimethylamino)butanoate + NADH + 2 H(+). The catalysed reaction is an aldehyde + NAD(+) + H2O = a carboxylate + NADH + 2 H(+). It catalyses the reaction 4-aminobutanal + NAD(+) + H2O = 4-aminobutanoate + NADH + 2 H(+). It carries out the reaction formaldehyde + NAD(+) + H2O = formate + NADH + 2 H(+). The enzyme catalyses acetaldehyde + NAD(+) + H2O = acetate + NADH + 2 H(+). The catalysed reaction is imidazole-4-acetaldehyde + NAD(+) + H2O = imidazole-4-acetate + NADH + 2 H(+). It catalyses the reaction acrolein + NAD(+) + H2O = acrylate + NADH + 2 H(+). It carries out the reaction (5-hydroxyindol-3-yl)acetaldehyde + NAD(+) + H2O = (5-hydroxyindol-3-yl)acetate + NADH + 2 H(+). The enzyme catalyses 3,4-dihydroxyphenylacetaldehyde + NAD(+) + H2O = 3,4-dihydroxyphenylacetate + NADH + 2 H(+). The catalysed reaction is spermine monoaldehyde + NAD(+) + H2O = N-(2-carboxyethyl)spermidine + NADH + 2 H(+). It catalyses the reaction propanal + NAD(+) + H2O = propanoate + NADH + 2 H(+). It carries out the reaction butanal + NAD(+) + H2O = butanoate + NADH + 2 H(+). The enzyme catalyses pentanal + NAD(+) + H2O = pentanoate + NADH + 2 H(+). The catalysed reaction is hexanal + NAD(+) + H2O = hexanoate + NADH + 2 H(+). It participates in amine and polyamine biosynthesis; carnitine biosynthesis. In terms of biological role, converts gamma-trimethylaminobutyraldehyde into gamma-butyrobetaine with high efficiency (in vitro). Can catalyze the irreversible oxidation of a broad range of aldehydes to the corresponding acids in an NAD-dependent reaction, but with low efficiency. Catalyzes the oxidation of aldehydes arising from biogenic amines and polyamines. In Sus scrofa (Pig), this protein is 4-trimethylaminobutyraldehyde dehydrogenase (ALDH9A1).